Here is a 272-residue protein sequence, read N- to C-terminus: Dermonecrotic toxin LvSicTox-alphaIC1biv (272 aa).

Histidine 5 is an active-site residue. Positions 25 and 27 each coordinate Mg(2+). Histidine 41 (nucleophile) is an active-site residue. Disulfide bonds link cysteine 45-cysteine 51 and cysteine 47-cysteine 189. Position 84 (aspartate 84) interacts with Mg(2+).

This sequence belongs to the arthropod phospholipase D family. Class II subfamily. The cofactor is Mg(2+). Expressed by the venom gland.

The protein localises to the secreted. The catalysed reaction is an N-(acyl)-sphingosylphosphocholine = an N-(acyl)-sphingosyl-1,3-cyclic phosphate + choline. It catalyses the reaction an N-(acyl)-sphingosylphosphoethanolamine = an N-(acyl)-sphingosyl-1,3-cyclic phosphate + ethanolamine. The enzyme catalyses a 1-acyl-sn-glycero-3-phosphocholine = a 1-acyl-sn-glycero-2,3-cyclic phosphate + choline. It carries out the reaction a 1-acyl-sn-glycero-3-phosphoethanolamine = a 1-acyl-sn-glycero-2,3-cyclic phosphate + ethanolamine. Functionally, dermonecrotic toxins cleave the phosphodiester linkage between the phosphate and headgroup of certain phospholipids (sphingolipid and lysolipid substrates), forming an alcohol (often choline) and a cyclic phosphate. This toxin acts on sphingomyelin (SM). It may also act on ceramide phosphoethanolamine (CPE), lysophosphatidylcholine (LPC) and lysophosphatidylethanolamine (LPE), but not on lysophosphatidylserine (LPS), and lysophosphatidylglycerol (LPG). It acts by transphosphatidylation, releasing exclusively cyclic phosphate products as second products. Induces dermonecrosis, hemolysis, increased vascular permeability, edema, inflammatory response, and platelet aggregation. The protein is Dermonecrotic toxin LvSicTox-alphaIC1biv of Loxosceles variegata (Recluse spider).